A 398-amino-acid polypeptide reads, in one-letter code: Phosphoglycerate kinase (398 aa).

Residues 21-23 (DFN), Arg-36, 59-62 (HLGR), Arg-119, and Arg-157 contribute to the substrate site. Residues Lys-208, Gly-296, Glu-327, and 354–357 (GGDS) contribute to the ATP site.

The protein belongs to the phosphoglycerate kinase family. Monomer.

Its subcellular location is the cytoplasm. It catalyses the reaction (2R)-3-phosphoglycerate + ATP = (2R)-3-phospho-glyceroyl phosphate + ADP. The protein operates within carbohydrate degradation; glycolysis; pyruvate from D-glyceraldehyde 3-phosphate: step 2/5. This chain is Phosphoglycerate kinase, found in Streptococcus pyogenes serotype M3 (strain ATCC BAA-595 / MGAS315).